Here is a 161-residue protein sequence, read N- to C-terminus: 3-isopropylmalate dehydratase small subunit (161 aa).

Belongs to the LeuD family. LeuD type 2 subfamily. As to quaternary structure, heterodimer of LeuC and LeuD.

It carries out the reaction (2R,3S)-3-isopropylmalate = (2S)-2-isopropylmalate. It functions in the pathway amino-acid biosynthesis; L-leucine biosynthesis; L-leucine from 3-methyl-2-oxobutanoate: step 2/4. In terms of biological role, catalyzes the isomerization between 2-isopropylmalate and 3-isopropylmalate, via the formation of 2-isopropylmaleate. In Metallosphaera sedula (strain ATCC 51363 / DSM 5348 / JCM 9185 / NBRC 15509 / TH2), this protein is 3-isopropylmalate dehydratase small subunit.